Reading from the N-terminus, the 232-residue chain is uncharacterized protein (232 aa).

A helical transmembrane segment spans residues 10-32 (GLTIYLYPVIAWIILVTKIESGL).

It localises to the membrane. This is an uncharacterized protein from Archaeoglobus fulgidus (strain ATCC 49558 / DSM 4304 / JCM 9628 / NBRC 100126 / VC-16).